The following is a 277-amino-acid chain: Sulfur carrier protein FdhD (277 aa).

The Cysteine persulfide intermediate role is filled by C121. 260–265 contacts Mo-bis(molybdopterin guanine dinucleotide); the sequence is FCKPGR.

Belongs to the FdhD family.

It localises to the cytoplasm. Functionally, required for formate dehydrogenase (FDH) activity. Acts as a sulfur carrier protein that transfers sulfur from IscS to the molybdenum cofactor prior to its insertion into FDH. The sequence is that of Sulfur carrier protein FdhD from Escherichia coli O6:H1 (strain CFT073 / ATCC 700928 / UPEC).